Consider the following 155-residue polypeptide: MSDNDQQLRVSKIQNGTVIDHIAGGQALNVLAILGIDGTSGDSVSVAMNMPSDRLGHKDVVKVEGRELSQNEVDVLSLIAPAATINIIRDYEVVEKGRVERPSVVEGVLECPNHNCITTENEPVDSRFAVGDDGVRCEYCDTIIRDDLPAHILAE.

Residues cysteine 111, cysteine 116, cysteine 137, and cysteine 140 each contribute to the Zn(2+) site.

It belongs to the PyrI family. Contains catalytic and regulatory chains. Zn(2+) is required as a cofactor.

In terms of biological role, involved in allosteric regulation of aspartate carbamoyltransferase. The polypeptide is Aspartate carbamoyltransferase regulatory chain (Haloarcula marismortui (strain ATCC 43049 / DSM 3752 / JCM 8966 / VKM B-1809) (Halobacterium marismortui)).